Here is a 57-residue protein sequence, read N- to C-terminus: Conotoxin reg3.17 (57 aa).

An N-terminal signal peptide occupies residues 1-16 (TICLLLFPLTVVPLDG). A propeptide spanning residues 17-44 (DQPAHQPAVRKHNIKSAVQLRQWDEEQQ) is cleaved from the precursor. 3 disulfides stabilise this stretch: C45–C57, C46–C53, and C50–C56.

This sequence belongs to the conotoxin M superfamily. In terms of tissue distribution, expressed by the venom duct.

Its subcellular location is the secreted. The protein is Conotoxin reg3.17 of Conus regius (Crown cone).